Reading from the N-terminus, the 167-residue chain is Cytochrome b6-f complex subunit 4 (167 aa).

3 helical membrane-spanning segments follow: residues 36–56 (LLYI…GLAV), 95–115 (LLGV…PFLE), and 131–151 (TVFL…TLPI).

Belongs to the cytochrome b family. PetD subfamily. As to quaternary structure, the 4 large subunits of the cytochrome b6-f complex are cytochrome b6, subunit IV (17 kDa polypeptide, petD), cytochrome f and the Rieske protein, while the 4 small subunits are petG, petL, petM and petN. The complex functions as a dimer.

Its subcellular location is the plastid. The protein resides in the chloroplast thylakoid membrane. Functionally, component of the cytochrome b6-f complex, which mediates electron transfer between photosystem II (PSII) and photosystem I (PSI), cyclic electron flow around PSI, and state transitions. This chain is Cytochrome b6-f complex subunit 4, found in Calycanthus floridus var. glaucus (Eastern sweetshrub).